We begin with the raw amino-acid sequence, 239 residues long: 1-(5-phosphoribosyl)-5-[(5-phosphoribosylamino)methylideneamino] imidazole-4-carboxamide isomerase (239 aa).

Asp12 acts as the Proton acceptor in catalysis. The active-site Proton donor is Asp132.

It belongs to the HisA/HisF family.

It is found in the cytoplasm. It carries out the reaction 1-(5-phospho-beta-D-ribosyl)-5-[(5-phospho-beta-D-ribosylamino)methylideneamino]imidazole-4-carboxamide = 5-[(5-phospho-1-deoxy-D-ribulos-1-ylimino)methylamino]-1-(5-phospho-beta-D-ribosyl)imidazole-4-carboxamide. Its pathway is amino-acid biosynthesis; L-histidine biosynthesis; L-histidine from 5-phospho-alpha-D-ribose 1-diphosphate: step 4/9. The polypeptide is 1-(5-phosphoribosyl)-5-[(5-phosphoribosylamino)methylideneamino] imidazole-4-carboxamide isomerase (Natronomonas pharaonis (strain ATCC 35678 / DSM 2160 / CIP 103997 / JCM 8858 / NBRC 14720 / NCIMB 2260 / Gabara) (Halobacterium pharaonis)).